A 1091-amino-acid chain; its full sequence is Isoleucine--tRNA ligase (1091 aa).

Residues 48–58 (PFATGLPHFGH) carry the 'HIGH' region motif. Residues 625-629 (KMSKA) carry the 'KMSKS' region motif. K628 provides a ligand contact to ATP.

This sequence belongs to the class-I aminoacyl-tRNA synthetase family. IleS type 2 subfamily. In terms of assembly, monomer. It depends on Zn(2+) as a cofactor.

It is found in the cytoplasm. It catalyses the reaction tRNA(Ile) + L-isoleucine + ATP = L-isoleucyl-tRNA(Ile) + AMP + diphosphate. Catalyzes the attachment of isoleucine to tRNA(Ile). As IleRS can inadvertently accommodate and process structurally similar amino acids such as valine, to avoid such errors it has two additional distinct tRNA(Ile)-dependent editing activities. One activity is designated as 'pretransfer' editing and involves the hydrolysis of activated Val-AMP. The other activity is designated 'posttransfer' editing and involves deacylation of mischarged Val-tRNA(Ile). The polypeptide is Isoleucine--tRNA ligase (Treponema pallidum (strain Nichols)).